Reading from the N-terminus, the 513-residue chain is Protein phosphatase 1H (513 aa).

Ser-7 carries the phosphoserine modification. The 430-residue stretch at 77–506 folds into the PPM-type phosphatase domain; sequence ATGYAEVINA…DDISVYVIPL (430 aa). A disordered region spans residues 110–133; it reads ITSTPNRNSKRRSSLPNGEGLQLK. Thr-113 bears the Phosphothreonine mark. Residues Ser-123 and Ser-210 each carry the phosphoserine modification. Omega-N-methylarginine is present on Arg-212. Phosphoserine is present on Ser-220. Thr-223 carries the phosphothreonine modification. At Ser-421 the chain carries Phosphoserine.

It belongs to the PP2C family.

Its subcellular location is the nucleus. The protein localises to the cytoplasm. The enzyme catalyses O-phospho-L-seryl-[protein] + H2O = L-seryl-[protein] + phosphate. It carries out the reaction O-phospho-L-threonyl-[protein] + H2O = L-threonyl-[protein] + phosphate. Dephosphorylates CDKN1B at 'Thr-187', thus removing a signal for proteasomal degradation. This chain is Protein phosphatase 1H (Ppm1h), found in Rattus norvegicus (Rat).